Consider the following 307-residue polypeptide: Acetaldehyde dehydrogenase (307 aa).

12 to 15 (SGNI) is a binding site for NAD(+). Cysteine 130 (acyl-thioester intermediate) is an active-site residue. NAD(+)-binding positions include 161–169 (SVGPGTRQN) and asparagine 272.

This sequence belongs to the acetaldehyde dehydrogenase family.

It catalyses the reaction acetaldehyde + NAD(+) + CoA = acetyl-CoA + NADH + H(+). This chain is Acetaldehyde dehydrogenase, found in Shewanella halifaxensis (strain HAW-EB4).